The sequence spans 1080 residues: DNA polymerase II large subunit (1080 aa).

The protein belongs to the archaeal DNA polymerase II family. In terms of assembly, heterodimer of a large subunit and a small subunit.

The catalysed reaction is DNA(n) + a 2'-deoxyribonucleoside 5'-triphosphate = DNA(n+1) + diphosphate. It carries out the reaction Exonucleolytic cleavage in the 3'- to 5'-direction to yield nucleoside 5'-phosphates.. Possesses two activities: a DNA synthesis (polymerase) and an exonucleolytic activity that degrades single-stranded DNA in the 3'- to 5'-direction. Has a template-primer preference which is characteristic of a replicative DNA polymerase. In Picrophilus torridus (strain ATCC 700027 / DSM 9790 / JCM 10055 / NBRC 100828 / KAW 2/3), this protein is DNA polymerase II large subunit.